The following is a 240-amino-acid chain: Phosphoribosylaminoimidazole-succinocarboxamide synthase (240 aa).

This sequence belongs to the SAICAR synthetase family.

The catalysed reaction is 5-amino-1-(5-phospho-D-ribosyl)imidazole-4-carboxylate + L-aspartate + ATP = (2S)-2-[5-amino-1-(5-phospho-beta-D-ribosyl)imidazole-4-carboxamido]succinate + ADP + phosphate + 2 H(+). The protein operates within purine metabolism; IMP biosynthesis via de novo pathway; 5-amino-1-(5-phospho-D-ribosyl)imidazole-4-carboxamide from 5-amino-1-(5-phospho-D-ribosyl)imidazole-4-carboxylate: step 1/2. This is Phosphoribosylaminoimidazole-succinocarboxamide synthase from Neorickettsia sennetsu (strain ATCC VR-367 / Miyayama) (Ehrlichia sennetsu).